Here is a 241-residue protein sequence, read N- to C-terminus: MSSLCDTSNGESHADPCQDKEHPRMLIPELCRLFYQLGWVTGTGGGISLRHGDQIYIAPSGVQKERIQPEDMFVCDVAERDISSPPAWKKLRKSQCTPLFMNAYTMRAAQAVIHTHSKAAVMATLLYPGKEFRITHQEMIKGIRKGNSGTNYRYNDTLVVPIIENTPEEQDLKERMALAMEEYPEACAVLVRRHGVYVWGETWEKAKTMCECYDYLFDIAVQMKQCGLDPSAVPSEEIDIV.

The span at 1–11 (MSSLCDTSNGE) shows a compositional bias: polar residues. Positions 1–20 (MSSLCDTSNGESHADPCQDK) are disordered. Cysteine 96 provides a ligand contact to substrate. Zn(2+) contacts are provided by histidine 114 and histidine 116. The Proton donor/acceptor role is filled by glutamate 138. Histidine 194 is a Zn(2+) binding site.

The protein belongs to the aldolase class II family. MtnB subfamily. It depends on Zn(2+) as a cofactor.

It localises to the cytoplasm. It catalyses the reaction 5-(methylsulfanyl)-D-ribulose 1-phosphate = 5-methylsulfanyl-2,3-dioxopentyl phosphate + H2O. The protein operates within amino-acid biosynthesis; L-methionine biosynthesis via salvage pathway; L-methionine from S-methyl-5-thio-alpha-D-ribose 1-phosphate: step 2/6. Functionally, catalyzes the dehydration of methylthioribulose-1-phosphate (MTRu-1-P) into 2,3-diketo-5-methylthiopentyl-1-phosphate (DK-MTP-1-P). Functions in the methionine salvage pathway. May play a role in apoptosis. The polypeptide is Methylthioribulose-1-phosphate dehydratase (Osmerus mordax (Rainbow smelt)).